A 435-amino-acid polypeptide reads, in one-letter code: Centrosomal protein of 55 kDa (435 aa).

3 disordered regions span residues 1–63, 213–239, and 268–287; these read MAAK…TDKA, HKEA…KVSR, and ERRR…ALLQ. Coiled coils occupy residues 18–140 and 185–373; these read SSSS…KNKY and EAYV…RESR. Basic and acidic residues-rich tracts occupy residues 26–49 and 213–222; these read AELE…DMKR and HKEAKSDDQS.

It localises to the cytoplasm. Its subcellular location is the cytoskeleton. The protein resides in the microtubule organizing center. It is found in the centrosome. The protein localises to the centriole. It localises to the cleavage furrow. Its subcellular location is the midbody. The protein resides in the midbody ring. Plays a role in mitotic exit and cytokinesis. Recruits PDCD6IP and TSG101 to midbody during cytokinesis. Required for successful completion of cytokinesis. Not required for microtubule nucleation. Plays a role in the development of the brain and kidney. The chain is Centrosomal protein of 55 kDa from Danio rerio (Zebrafish).